Consider the following 211-residue polypeptide: Probable nicotinate-nucleotide adenylyltransferase (211 aa).

Belongs to the NadD family.

It catalyses the reaction nicotinate beta-D-ribonucleotide + ATP + H(+) = deamido-NAD(+) + diphosphate. Its pathway is cofactor biosynthesis; NAD(+) biosynthesis; deamido-NAD(+) from nicotinate D-ribonucleotide: step 1/1. Its function is as follows. Catalyzes the reversible adenylation of nicotinate mononucleotide (NaMN) to nicotinic acid adenine dinucleotide (NaAD). The polypeptide is Probable nicotinate-nucleotide adenylyltransferase (Desulfotalea psychrophila (strain LSv54 / DSM 12343)).